Here is a 259-residue protein sequence, read N- to C-terminus: Type III pantothenate kinase (259 aa).

Position 6-13 (D6–V13) interacts with ATP. Substrate is bound by residues Y100 and G107–R110. Residue D109 is the Proton acceptor of the active site. Position 129 (D129) interacts with K(+). T132 is an ATP binding site. T184 is a substrate binding site.

It belongs to the type III pantothenate kinase family. In terms of assembly, homodimer. NH4(+) serves as cofactor. K(+) is required as a cofactor.

It is found in the cytoplasm. The enzyme catalyses (R)-pantothenate + ATP = (R)-4'-phosphopantothenate + ADP + H(+). It participates in cofactor biosynthesis; coenzyme A biosynthesis; CoA from (R)-pantothenate: step 1/5. In terms of biological role, catalyzes the phosphorylation of pantothenate (Pan), the first step in CoA biosynthesis. The protein is Type III pantothenate kinase of Clostridium kluyveri (strain NBRC 12016).